A 205-amino-acid polypeptide reads, in one-letter code: Inactive ribonuclease-like protein 9 (205 aa).

The first 26 residues, 1-26 (MMRTLITIHPLPLLLLLQQLLQPVQF), serve as a signal peptide directing secretion. 3 disulfides stabilise this stretch: Cys-98/Cys-153, Cys-116/Cys-168, and Cys-123/Cys-130. N-linked (GlcNAc...) asparagine glycans are attached at residues Asn-131 and Asn-143.

It belongs to the pancreatic ribonuclease family.

Its subcellular location is the secreted. Functionally, does not exhibit any ribonuclease activity. The sequence is that of Inactive ribonuclease-like protein 9 (RNASE9) from Gorilla gorilla gorilla (Western lowland gorilla).